Consider the following 869-residue polypeptide: AP-3 complex subunit delta (869 aa).

At Ser-2 the chain carries N-acetylserine. 7 HEAT repeats span residues 33 to 70 (NFISRAVEEIRREIKATDLSTKSTALHKLSYLAALHGV), 107 to 142 (SVMLLITNQVRKDLNSANEYEVSLALECLSRIGTHD), 143 to 179 (LARDLTPEVFTLLGSSKSFVKKKAIGVVLRVFEKYHD), 180 to 216 (AVKVCFKRLVENLETSDPQILSAVVGVFCELATKDPQ), 218 to 254 (CLPLAPEFYKVLVDSRNNWVLIKVLKIFAKLALIEPR), 292 to 329 (AAVKLAVAKIREFLVEDDPNLKYLGLNALSIVAPKHLW), and 330 to 366 (AVLENKEVVVKAMSDEDPNVKLEALHLLMAMVNEDNV). Positions 738 to 869 (ISQDSFNPKR…EQVIIPDFLL (132 aa)) are disordered. Residues 769–780 (ITPQAKTNIQTA) are compositionally biased toward polar residues. Residues 815–830 (QEKEESSRIENHQNSE) show a composition bias toward basic and acidic residues. Residues 831 to 850 (KKKKKKKKKKGEGSSKHKSR) are compositionally biased toward basic residues.

Belongs to the adaptor complexes large subunit family. Adaptor protein complex 3 (AP-3) is a heterotetramer composed of two large adaptins (delta-type subunit and beta-type subunit), a medium adaptin (mu-type subunit) and a small adaptin (sigma-type subunit). Binds to EPSIN2.

It is found in the cytoplasm. Its subcellular location is the golgi apparatus membrane. Its function is as follows. Part of the AP-3 complex, an adaptor-related complex which seems to be clathrin-associated. The complex is associated with the Golgi region as well as more peripheral structures. It facilitates the budding of vesicles from the Golgi membrane and may be directly involved in trafficking to the vacuole. It also function in maintaining the identity of lytic vacuoles and in regulating the transition between storage and lytic vacuoles. The polypeptide is AP-3 complex subunit delta (DELTA-ADR) (Arabidopsis thaliana (Mouse-ear cress)).